Here is a 445-residue protein sequence, read N- to C-terminus: Lipoyl synthase, mitochondrial (445 aa).

The transit peptide at 1–40 (MRPGSWRVITHYGFTGPIQRLQAPLRRSLARAAALSTRSY) directs the protein to the mitochondrion. A compositionally biased stretch (low complexity) spans 42–71 (TIPSAPSSQPTSQESSPAASASASASAPAT). Residues 42 to 77 (TIPSAPSSQPTSQESSPAASASASASAPATKPRPTY) form a disordered region. [4Fe-4S] cluster is bound by residues Cys157, Cys162, Cys168, Cys188, Cys192, Cys195, and Ser405. In terms of domain architecture, Radical SAM core spans 171 to 394 (GSNKAAATAT…RQRALDMGFL (224 aa)).

The protein belongs to the radical SAM superfamily. Lipoyl synthase family. [4Fe-4S] cluster is required as a cofactor.

Its subcellular location is the mitochondrion. It carries out the reaction [[Fe-S] cluster scaffold protein carrying a second [4Fe-4S](2+) cluster] + N(6)-octanoyl-L-lysyl-[protein] + 2 oxidized [2Fe-2S]-[ferredoxin] + 2 S-adenosyl-L-methionine + 4 H(+) = [[Fe-S] cluster scaffold protein] + N(6)-[(R)-dihydrolipoyl]-L-lysyl-[protein] + 4 Fe(3+) + 2 hydrogen sulfide + 2 5'-deoxyadenosine + 2 L-methionine + 2 reduced [2Fe-2S]-[ferredoxin]. It participates in protein modification; protein lipoylation via endogenous pathway; protein N(6)-(lipoyl)lysine from octanoyl-[acyl-carrier-protein]: step 2/2. Functionally, catalyzes the radical-mediated insertion of two sulfur atoms into the C-6 and C-8 positions of the octanoyl moiety bound to the lipoyl domains of lipoate-dependent enzymes, thereby converting the octanoylated domains into lipoylated derivatives. The polypeptide is Lipoyl synthase, mitochondrial (Sordaria macrospora (strain ATCC MYA-333 / DSM 997 / K(L3346) / K-hell)).